We begin with the raw amino-acid sequence, 266 residues long: Apolipoprotein A-I (266 aa).

Residues 1-18 (MKAVVLTLAVLFLTGSQA) form the signal peptide. 2 tandem repeats follow at residues 67 to 88 (LKLLDNWDSLSSTVAKLREQIG) and 89 to 110 (PVTQEFWDNLEKETEVLRQEMN). Residues 67–266 (LKLLDNWDSL…DEATKKLNAQ (200 aa)) form a 10 X approximate tandem repeats region. A Methionine sulfoxide modification is found at Met109. A 3; half-length repeat occupies 111 to 121 (KDLEEVKKKVQ). Repeat copies occupy residues 122-143 (PYLDEFQSKWHEEVELYRQKVA), 144-165 (PLGAELREGARQKLQELQEKLS), 166-187 (PLGEELRDRARTHVDALRAQLA), 188-209 (PYSEQLRERLAARLQALKEGGG), and 210-231 (ATLTEYHAKASEHLSALREKAK). The stretch at 232–242 (PALEDLRQGLM) is one 9; half-length repeat. Repeat 10 spans residues 243–266 (PVLESFRASLLAAVDEATKKLNAQ).

It belongs to the apolipoprotein A1/A4/E family. Homodimer. Interacts with APOA1BP and CLU. Component of a sperm activating protein complex (SPAP), consisting of APOA1, an immunoglobulin heavy chain, an immunoglobulin light chain and albumin. Interacts with NDRG1. Interacts with SCGB3A2. Interacts with NAXE and YJEFN3. In terms of processing, glycosylated. Palmitoylated. Post-translationally, phosphorylation sites are present in the extracellular medium.

The protein resides in the secreted. In terms of biological role, participates in the reverse transport of cholesterol from tissues to the liver for excretion by promoting cholesterol efflux from tissues and by acting as a cofactor for the lecithin cholesterol acyltransferase (LCAT). As part of the SPAP complex, activates spermatozoa motility. The sequence is that of Apolipoprotein A-I (APOA1) from Phoca vitulina (Harbor seal).